We begin with the raw amino-acid sequence, 1704 residues long: Phospholipid-transporting ATPase ABCA3 (1704 aa).

Asparagine 14 carries N-linked (GlcNAc...) asparagine glycosylation. The helical transmembrane segment at 22–42 (VLVTVLELFLPLLFSGILIWL) threads the bilayer. Residues asparagine 53, asparagine 124, and asparagine 140 are each glycosylated (N-linked (GlcNAc...) asparagine). 6 helical membrane passes run 261–283 (YQLPLLLLLSFTYTALTIARAVV), 307–327 (AWFLLFFLFLLIAASFMTLLF), 344–364 (SLVLAFLLCFAISTISFSFMV), 373–393 (MAAAFGGFLYFFTYIPYFFVA), 405–425 (LCSCLLSNVAMAMGAQLIGKF), and 447–467 (FCFGQVLGMLLLDSVLYGLVT). The ABC transporter 1 domain occupies 530-763 (IKIKHLSKVF…YGAGYHMTLV (234 aa)). Residue 566-573 (GHNGAGKT) participates in ATP binding. N-linked (GlcNAc...) asparagine glycosylation is found at asparagine 620 and asparagine 783. Helical transmembrane passes span 925–945 (MVAAQVLVPLTCVTLALLAIN), 1100–1120 (IALNLLFAMAFLASTFSILAV), 1144–1164 (SALLWDLISFLIPSLLLLVVF), 1183–1203 (LLLLLYGWAIIPLMYLMNFFF), 1213–1233 (LTIFNILSGIATFLMVTIMRI), 1245–1265 (LDHVFLVLPNHCLGMAVSSFY), and 1306–1326 (FVASMAASGCAYLILLFLIET). Residues 1381–1614 (LIIKELSKVY…FGSGYSLRAK (234 aa)) enclose the ABC transporter 2 domain. Position 1416–1423 (1416–1423 (GFNGAGKT)) interacts with ATP.

Belongs to the ABC transporter superfamily. ABCA family. Homooligomer; disulfide-linked. Post-translationally, N-glycosylated. Localization at intracellular vesicles is accompanied by processing of oligosaccharide from high mannose type to complex type. N-linked glycosylation at Asn-124 and Asn-140 is required for stability and efficient anterograde trafficking and prevents from proteasomal degradation. Proteolytically cleaved by CTSL and to a lower extent by CTSB within multivesicular bodies (MVB) and lamellar bodies (LB) leading to a mature form of 150 kDa. In terms of tissue distribution, expressed in brain, pancreas, skeletal muscle and heart. Highly expressed in the lung in an AT2-cell-specific manner. Weakly expressed in placenta, kidney and liver. Also expressed in medullary thyroid carcinoma cells (MTC) and in C-cell carcinoma.

It is found in the endosome. It localises to the multivesicular body membrane. The protein localises to the cytoplasmic vesicle membrane. Its subcellular location is the late endosome membrane. The protein resides in the lysosome membrane. The catalysed reaction is ATP + H2O + xenobioticSide 1 = ADP + phosphate + xenobioticSide 2.. It carries out the reaction a 1,2-diacyl-sn-glycero-3-phosphocholine(in) + ATP + H2O = a 1,2-diacyl-sn-glycero-3-phosphocholine(out) + ADP + phosphate + H(+). The enzyme catalyses ATP + H2O + phospholipidSide 1 = ADP + phosphate + phospholipidSide 2.. It catalyses the reaction 1,2-dihexadecanoyl-sn-glycero-3-phosphocholine(in) + ATP + H2O = 1,2-dihexadecanoyl-sn-glycero-3-phosphocholine(out) + ADP + phosphate + H(+). The catalysed reaction is cholesterol(in) + ATP + H2O = cholesterol(out) + ADP + phosphate + H(+). It carries out the reaction a 1,2-diacyl-sn-glycero-3-phospho-(1'-sn-glycerol)(in) + ATP + H2O = a 1,2-diacyl-sn-glycero-3-phospho-(1'-sn-glycerol)(out) + ADP + phosphate + H(+). With respect to regulation, the ATP-dependent phosphatidylcholine transport is competitively inhibited by miltefosine. Functionally, catalyzes the ATP-dependent transport of phospholipids such as phosphatidylcholine and phosphoglycerol from the cytoplasm into the lumen side of lamellar bodies, in turn participates in the lamellar bodies biogenesis and homeostasis of pulmonary surfactant. Transports preferentially phosphatidylcholine containing short acyl chains. In addition plays a role as an efflux transporter of miltefosine across macrophage membranes and free cholesterol (FC) through intralumenal vesicles by removing FC from the cell as a component of surfactant and protects cells from free cholesterol toxicity. This is Phospholipid-transporting ATPase ABCA3 from Homo sapiens (Human).